Consider the following 1727-residue polypeptide: Nucleoporin alm1 (1727 aa).

Coiled-coil stretches lie at residues 57–361 (QEVN…KNTS), 443–463 (NFLSESLETSNNNLTKVQAEL), 542–740 (IKEA…AEEL), 804–1106 (AARK…INES), 1223–1427 (GERS…QLNK), 1497–1555 (NEEE…AESA), and 1601–1664 (QKEW…KKDS). Over residues 1423–1448 (EQLNKPSATPTATTQSEPSTVSLEEF) the composition is skewed to polar residues. Disordered regions lie at residues 1423–1459 (EQLNKPSATPTATTQSEPSTVSLEEFNSTKEELSSTQ), 1477–1500 (EKVRQNSNKSEGTSKDTEIPNEEE), and 1656–1727 (LEQS…KKAK). Polar residues-rich tracts occupy residues 1672–1684 (ASKNTDSNKSNSE) and 1702–1714 (VDTNSPPKRSSSD). Position 1706 is a phosphoserine (Ser-1706).

It is found in the nucleus. The protein localises to the nuclear pore complex. It localises to the nucleus envelope. Functionally, maintains the proteasome and its anchor cut8 at the nucleus envelope and is required for kinetochore component proteostasis. Proper kinetochore stoichiometry ensures the correct attachment of kinetochores to spindle microtubules during cytokinesis. Required for the localization of spindle assembly checkpoint (SAC) protein mad2 and bub1 to the nucleus envelope during interphase, but not their localization during mitosis. This is Nucleoporin alm1 from Schizosaccharomyces pombe (strain 972 / ATCC 24843) (Fission yeast).